Reading from the N-terminus, the 304-residue chain is Protoheme IX farnesyltransferase (304 aa).

7 helical membrane-spanning segments follow: residues 24–44 (VMTL…GTIH), 45–65 (PVIA…AAAL), 107–127 (VFVM…FSIF), 145–165 (IVIG…AVTG), 172–192 (VLLF…LALF), 234–254 (WIGG…LVFV), and 277–297 (LFGY…GDRL).

It belongs to the UbiA prenyltransferase family. Protoheme IX farnesyltransferase subfamily.

It localises to the cell inner membrane. The enzyme catalyses heme b + (2E,6E)-farnesyl diphosphate + H2O = Fe(II)-heme o + diphosphate. It participates in porphyrin-containing compound metabolism; heme O biosynthesis; heme O from protoheme: step 1/1. Its function is as follows. Converts heme B (protoheme IX) to heme O by substitution of the vinyl group on carbon 2 of heme B porphyrin ring with a hydroxyethyl farnesyl side group. The sequence is that of Protoheme IX farnesyltransferase from Novosphingobium aromaticivorans (strain ATCC 700278 / DSM 12444 / CCUG 56034 / CIP 105152 / NBRC 16084 / F199).